Here is a 129-residue protein sequence, read N- to C-terminus: Ribulose bisphosphate carboxylase small subunit (129 aa).

A compositionally biased stretch (basic and acidic residues) spans 104-120; the sequence is ENEPSLRMTRTESDGRS. The segment at 104-129 is disordered; the sequence is ENEPSLRMTRTESDGRSQHYTWETQR.

It belongs to the RuBisCO small chain family. As to quaternary structure, heterohexadecamer of 8 large and 8 small subunits.

Its function is as follows. RuBisCO catalyzes two reactions: the carboxylation of D-ribulose 1,5-bisphosphate, the primary event in carbon dioxide fixation, as well as the oxidative fragmentation of the pentose substrate. Both reactions occur simultaneously and in competition at the same active site. Although the small subunit is not catalytic it is essential for maximal activity. The polypeptide is Ribulose bisphosphate carboxylase small subunit (Sinorhizobium medicae (strain WSM419) (Ensifer medicae)).